Here is a 204-residue protein sequence, read N- to C-terminus: Large ribosomal subunit protein eL15 (204 aa).

The protein belongs to the eukaryotic ribosomal protein eL15 family. Component of the large ribosomal subunit.

The protein localises to the cytoplasm. In terms of biological role, component of the large ribosomal subunit. The ribosome is a large ribonucleoprotein complex responsible for the synthesis of proteins in the cell. In Silurus asotus (Amur catfish), this protein is Large ribosomal subunit protein eL15 (rpl15).